We begin with the raw amino-acid sequence, 385 residues long: MFEKPLGMRDTFPQIFEKVEAVRQTGRDFLTKRGYEFIKTPAVEYFDTVGKASAIADTHLFKLVDSQGNTLVLRPDMTTPIARVATSKLLKEMIPQRLAYFASVFRAQEAEGGRPAEFDQMGIELIGDQSVFADAEVIVTAMELLKHLKLEAFKVTIGHAGILNCILQDYTESIEQQTTLRTLLVHRNYVGFEEAVDSFNLPKAKADALLQFIEEAMDVKDIRDIEKYVRKNDALVYMQQLAQLLEMADLAAYVTFDFTLSSHMSYYTGMLFEVFALGSGFPLGNGGRYDGLLEVFGSKAGATGFSIRVDRLLETLHGQSEMQQEATVVLFDEEQFEAALIKVNTLRAAGKLATLQLRSSLVDEEAFLAHFTEVVVVGQEEIGSE.

This sequence belongs to the class-II aminoacyl-tRNA synthetase family. HisZ subfamily. Heteromultimer composed of HisG and HisZ subunits.

Its subcellular location is the cytoplasm. The protein operates within amino-acid biosynthesis; L-histidine biosynthesis; L-histidine from 5-phospho-alpha-D-ribose 1-diphosphate: step 1/9. Functionally, required for the first step of histidine biosynthesis. May allow the feedback regulation of ATP phosphoribosyltransferase activity by histidine. The polypeptide is ATP phosphoribosyltransferase regulatory subunit (Lysinibacillus sphaericus (strain C3-41)).